Consider the following 79-residue polypeptide: DNA-directed RNA polymerase subunit omega (79 aa).

Belongs to the RNA polymerase subunit omega family. The RNAP catalytic core consists of 2 alpha, 1 beta, 1 beta' and 1 omega subunit. When a sigma factor is associated with the core the holoenzyme is formed, which can initiate transcription.

It carries out the reaction RNA(n) + a ribonucleoside 5'-triphosphate = RNA(n+1) + diphosphate. Functionally, promotes RNA polymerase assembly. Latches the N- and C-terminal regions of the beta' subunit thereby facilitating its interaction with the beta and alpha subunits. The polypeptide is DNA-directed RNA polymerase subunit omega (Kosmotoga olearia (strain ATCC BAA-1733 / DSM 21960 / TBF 19.5.1)).